The primary structure comprises 117 residues: Ig heavy chain V region 102 (117 aa).

An N-terminal signal peptide occupies residues 1–19 (MGWSCIILFLVATATGVHS). The segment at 20–49 (HVQLQQPGAELVKPGASVKVSCKASGYTFT) is framework-1. A disulfide bridge links Cys41 with Cys115. The interval 50–54 (SYWMH) is complementarity-determining-1. Residues 55–68 (WVKQRPGQGLEWIG) form a framework-2 region. Residues 69 to 85 (RIHPSDSDTNYNQKFKG) are complementarity-determining-2. The segment at 86-117 (KATLTVDKSSSTAYMQLSSLTSEDSAVYYCAI) is framework-3.

This is Ig heavy chain V region 102 from Mus musculus (Mouse).